Here is a 294-residue protein sequence, read N- to C-terminus: Probable 2-(5''-triphosphoribosyl)-3'-dephosphocoenzyme-A synthase (294 aa).

This sequence belongs to the CitG/MdcB family.

It catalyses the reaction 3'-dephospho-CoA + ATP = 2'-(5''-triphospho-alpha-D-ribosyl)-3'-dephospho-CoA + adenine. This Streptococcus pyogenes serotype M2 (strain MGAS10270) protein is Probable 2-(5''-triphosphoribosyl)-3'-dephosphocoenzyme-A synthase.